We begin with the raw amino-acid sequence, 412 residues long: Subtilisin-like protease 6 (412 aa).

The signal sequence occupies residues 1–20; that stretch reads MGFITKAIPIVLAALSTVNG. The propeptide occupies 21 to 127; that stretch reads ARILEAGPHA…VRTTTNGTNL (107 aa). One can recognise an Inhibitor I9 domain in the interval 36–120; it reads KYIVVMKKDV…FIEPDFVVRT (85 aa). One can recognise a Peptidase S8 domain in the interval 135-412; the sequence is SWGLARVGSK…SKLIYNGSGK (278 aa). Residues Asp167 and His198 each act as charge relay system in the active site. N-linked (GlcNAc...) asparagine glycosylation is found at Asn252 and Asn264. The active-site Charge relay system is the Ser358. Asn408 carries N-linked (GlcNAc...) asparagine glycosylation.

The protein belongs to the peptidase S8 family.

The protein resides in the secreted. Its function is as follows. Secreted subtilisin-like serine protease with keratinolytic activity that contributes to pathogenicity. This Arthroderma benhamiae (strain ATCC MYA-4681 / CBS 112371) (Trichophyton mentagrophytes) protein is Subtilisin-like protease 6 (SUB6).